The following is a 246-amino-acid chain: tRNA (guanine-N(1)-)-methyltransferase (246 aa).

Residues Gly117 and 137–142 (IGDYVL) contribute to the S-adenosyl-L-methionine site.

This sequence belongs to the RNA methyltransferase TrmD family. In terms of assembly, homodimer.

Its subcellular location is the cytoplasm. It catalyses the reaction guanosine(37) in tRNA + S-adenosyl-L-methionine = N(1)-methylguanosine(37) in tRNA + S-adenosyl-L-homocysteine + H(+). Functionally, specifically methylates guanosine-37 in various tRNAs. The sequence is that of tRNA (guanine-N(1)-)-methyltransferase from Acinetobacter baumannii (strain ACICU).